A 320-amino-acid polypeptide reads, in one-letter code: MQTRNTFSWIREEITRSISVSLMIYIITWASISSAYPIFAQQNYENPREATGRIVCANCHLANKPVDIEVPQTVLPDTVFEAVVKIPYDMQLKQVLANGKKGALNVGAVLILPEGFELAPPDRISPEMKEKIGNLSFQNYRPDKKNILVIGPVPGQKYSEITFPILAPDPATNKDVHFLKYPIYVGGNRGRGQIYPDGSKSNNTVYNATAGGIISKILRKEKGGYEITIVDASNERQVIDIIPRGLELLVSEGESIKLDQPLTSNPNVGGFGQGDAEIVLQDPLRVQGLLFFLGSVVLAQIFLVLKKKQFEKVQLSEMNF.

The signal sequence occupies residues 1-35 (MQTRNTFSWIREEITRSISVSLMIYIITWASISSA). 4 residues coordinate heme: Y36, C56, C59, and H60. A helical membrane pass occupies residues 286–306 (VQGLLFFLGSVVLAQIFLVLK).

It belongs to the cytochrome f family. As to quaternary structure, the 4 large subunits of the cytochrome b6-f complex are cytochrome b6, subunit IV (17 kDa polypeptide, petD), cytochrome f and the Rieske protein, while the 4 small subunits are PetG, PetL, PetM and PetN. The complex functions as a dimer. Requires heme as cofactor.

The protein localises to the plastid. Its subcellular location is the chloroplast thylakoid membrane. Functionally, component of the cytochrome b6-f complex, which mediates electron transfer between photosystem II (PSII) and photosystem I (PSI), cyclic electron flow around PSI, and state transitions. This Nasturtium officinale (Watercress) protein is Cytochrome f.